The chain runs to 201 residues: Ribosome maturation factor RimP (201 aa).

Residues 180–201 (LRRGSAPAQDEEGEDEAPGAPL) are disordered. The segment covering 188 to 201 (QDEEGEDEAPGAPL) has biased composition (acidic residues).

It belongs to the RimP family.

Its subcellular location is the cytoplasm. Its function is as follows. Required for maturation of 30S ribosomal subunits. The chain is Ribosome maturation factor RimP from Methylobacterium sp. (strain 4-46).